The following is a 173-amino-acid chain: Ribosome maturation factor RimM (173 aa).

The region spanning 98–171 is the PRC barrel domain; sequence DDQYYYDEII…LITIDALEGL (74 aa).

Belongs to the RimM family. As to quaternary structure, binds ribosomal protein uS19.

The protein resides in the cytoplasm. In terms of biological role, an accessory protein needed during the final step in the assembly of 30S ribosomal subunit, possibly for assembly of the head region. Essential for efficient processing of 16S rRNA. May be needed both before and after RbfA during the maturation of 16S rRNA. It has affinity for free ribosomal 30S subunits but not for 70S ribosomes. This is Ribosome maturation factor RimM from Leuconostoc mesenteroides subsp. mesenteroides (strain ATCC 8293 / DSM 20343 / BCRC 11652 / CCM 1803 / JCM 6124 / NCDO 523 / NBRC 100496 / NCIMB 8023 / NCTC 12954 / NRRL B-1118 / 37Y).